Consider the following 552-residue polypeptide: Solute carrier family 22 member 6-B (552 aa).

At 1-16 (MAFQEILESLGGMGRY) the chain is on the cytoplasmic side. Residues 17 to 37 (QVIHVVLLSLPVFMLASHNLM) traverse the membrane as a helical segment. Over 38–137 (QNFTAATPSH…LVCNHRRMRQ (100 aa)) the chain is Extracellular. Residues 138–158 (VAQSIYMAGVLVGSILFGGLS) traverse the membrane as a helical segment. Residues 159–164 (DKFGRR) lie on the Cytoplasmic side of the membrane. A helical transmembrane segment spans residues 165–184 (PLNIWSNLQMFVTGICAAFS). A topological domain (extracellular) is located at residue Pro185. A helical transmembrane segment spans residues 186-206 (NYIWYCIFRFLTGVAFSGIVL). Over 207-225 (NSYSLTVEWIPTGNRAFTS) the chain is Cytoplasmic. The chain crosses the membrane as a helical span at residues 226 to 246 (TATGYCYTMGQLVLVGLAFII). The Extracellular segment spans residues 247–250 (RDWQ). A helical membrane pass occupies residues 251–271 (WLQLAASIPFFFYFLYSWWIP). At 272–336 (ESGRWLVLSG…YSALDLVRTP (65 aa)) the chain is on the cytoplasmic side. The helical transmembrane segment at 337 to 356 (VVRRISFCISCTWFSTSFAY) threads the bilayer. Residue Tyr357 is a topological domain, extracellular. Residues 358–378 (GLALDLQSFGVSIYIIQIIFG) traverse the membrane as a helical segment. The Cytoplasmic segment spans residues 379 to 398 (TVDIPAKFISYFITTYVGRR). A helical membrane pass occupies residues 399–419 (VSQAITLILAGIAILVNISVP). The Extracellular portion of the chain corresponds to 420-426 (QDFQTVR). A helical transmembrane segment spans residues 427–447 (TAMAVFGKGCLAASFNCLYLY). The Cytoplasmic portion of the chain corresponds to 448–459 (TGELYPTVIRQT). A helical membrane pass occupies residues 460-480 (GMGLGAMMARLGGIIAPLAQM). Over 481–487 (TGDIYHS) the chain is Extracellular. The helical transmembrane segment at 488-508 (LPLIIFGCLPILSGIAGCFLP) threads the bilayer. Residues 509-552 (ETLGVPLPETIEEVESPDKQQKDVNVSAKIPLKETELYNMKTDV) lie on the Cytoplasmic side of the membrane.

It belongs to the major facilitator (TC 2.A.1) superfamily. Organic cation transporter (TC 2.A.1.19) family. Glycosylated. Glycosylation is necessary for proper targeting of the transporter to the plasma membrane.

It is found in the cell membrane. The protein localises to the basolateral cell membrane. It localises to the basal cell membrane. In terms of biological role, involved in the renal elimination of endogenous and exogenous organic anions. Mediates the sodium-independent uptake of p-aminohippurate (PAH), cidofovir, adefovir, 9-(2-phosphonylmethoxyethyl) guanine (PMEG), 9-(2-phosphonylmethoxyethyl) diaminopurine (PMEDAP) and edaravone sulfate. PAH uptake is inhibited by furosemide, steviol, phorbol 12-myristate 13-acetate (PMA), calcium ionophore A23187, benzylpenicillin, furosemide, indomethacin, bumetamide, losartan, probenecid, phenol red, urate, and alpha-ketoglutarate. This Xenopus laevis (African clawed frog) protein is Solute carrier family 22 member 6-B (slc22a6-b).